Reading from the N-terminus, the 753-residue chain is Synaptotagmin-like protein 5 (753 aa).

The 117-residue stretch at 7–123 folds into the RabBD domain; it reads FINLSFLLDH…IISGEWFLEE (117 aa). Residues 64-106 form an FYVE-type zinc finger; sequence CVHCQKSLGLIFDRGAPCQACSLRVCSECRVTGLDGSWKCTVC. Disordered stretches follow at residues 145–188, 221–283, and 298–359; these read RRSP…GFLL, SFKS…GFEN, and TKSH…LNSL. The residue at position 147 (serine 147) is a Phosphoserine. Low complexity predominate over residues 224–238; sequence SVSGSDRGSTTSSDL. Polar residues-rich tracts occupy residues 260–275 and 305–316; these read TQRSPAPSARSVTSIS and TSGTPSIAVSGT. 2 consecutive C2 domains span residues 429–550 and 590–717; these read VTGE…DEWF and PQGK…VDWM.

In terms of assembly, binds RAB27A that has been activated by GTP-binding.

Its subcellular location is the membrane. Functionally, may act as Rab effector protein and play a role in vesicle trafficking. Binds phospholipids. The sequence is that of Synaptotagmin-like protein 5 (Sytl5) from Rattus norvegicus (Rat).